The chain runs to 145 residues: 3-hydroxyacyl-[acyl-carrier-protein] dehydratase FabZ (145 aa).

Histidine 49 is a catalytic residue.

This sequence belongs to the thioester dehydratase family. FabZ subfamily.

Its subcellular location is the cytoplasm. It catalyses the reaction a (3R)-hydroxyacyl-[ACP] = a (2E)-enoyl-[ACP] + H2O. Involved in unsaturated fatty acids biosynthesis. Catalyzes the dehydration of short chain beta-hydroxyacyl-ACPs and long chain saturated and unsaturated beta-hydroxyacyl-ACPs. The sequence is that of 3-hydroxyacyl-[acyl-carrier-protein] dehydratase FabZ from Ehrlichia ruminantium (strain Gardel).